Here is a 260-residue protein sequence, read N- to C-terminus: 2-amino-5-formylamino-6-ribosylaminopyrimidin-4(3H)-one 5'-monophosphate deformylase (260 aa).

Fe cation is bound by residues Glu33, His35, Asp44, and His112.

The protein belongs to the creatininase superfamily. FAPy deformylase family. As to quaternary structure, homodimer. Fe(2+) is required as a cofactor. It depends on Zn(2+) as a cofactor.

The catalysed reaction is 2-amino-5-formylamino-6-(5-phospho-D-ribosylamino)pyrimidin-4(3H)-one + H2O = 2,5-diamino-6-(1-D-ribosylamino)pyrimidin-4(3H)-one 5'-phosphate + formate + H(+). It participates in cofactor biosynthesis; coenzyme F420 biosynthesis. Its pathway is cofactor biosynthesis; riboflavin biosynthesis. In terms of biological role, catalyzes the hydrolysis of the formamide of 2-amino-5-formylamino-6-ribosylamino-4(3H)-pyrimidinone 5'-monophosphate (FAPy) to form 2,5-diamino-6-ribosylamino-4(3H)-pyrimidinone 5'-phosphate (APy). This is 2-amino-5-formylamino-6-ribosylaminopyrimidin-4(3H)-one 5'-monophosphate deformylase from Methanococcus voltae (strain ATCC BAA-1334 / A3).